A 514-amino-acid polypeptide reads, in one-letter code: 2,3-bisphosphoglycerate-independent phosphoglycerate mutase (514 aa).

Mn(2+)-binding residues include Asp14 and Ser64. The active-site Phosphoserine intermediate is the Ser64. Substrate is bound by residues His125, 155–156 (RD), Arg187, Arg193, 263–266 (RADR), and Lys336. Mn(2+)-binding residues include Asp403, His407, Asp444, His445, and His463.

It belongs to the BPG-independent phosphoglycerate mutase family. As to quaternary structure, monomer. The cofactor is Mn(2+).

The enzyme catalyses (2R)-2-phosphoglycerate = (2R)-3-phosphoglycerate. The protein operates within carbohydrate degradation; glycolysis; pyruvate from D-glyceraldehyde 3-phosphate: step 3/5. Functionally, catalyzes the interconversion of 2-phosphoglycerate and 3-phosphoglycerate. This is 2,3-bisphosphoglycerate-independent phosphoglycerate mutase from Shewanella sp. (strain MR-4).